Here is an 897-residue protein sequence, read N- to C-terminus: Ubiquitin carboxyl-terminal hydrolase 33 (897 aa).

The UBP-type zinc finger occupies 7–110; that stretch reads NDCPHLECVG…KQLPNAAKAV (104 aa). Residues C9, H11, C31, C34, C44, C49, C54, H61, H65, H71, C84, and C87 each coordinate Zn(2+). In terms of domain architecture, USP spans 156 to 670; sequence TGLKNIGNTC…EAYVLFYKKS (515 aa). C165 acts as the Nucleophile in catalysis. Disordered stretches follow at residues 261-308 and 343-420; these read LIPE…GPRV and GSHG…HKKV. The span at 287–297 shows a compositional bias: polar residues; the sequence is DDFQSCESCGS. 2 stretches are compositionally biased toward basic and acidic residues: residues 299-308 and 344-353; these read DRADNEGPRV and SHGDLDKDVD. Over residues 355–396 the composition is skewed to polar residues; the sequence is TSDSRPIISSQGAIKAQGRTSDSEIQVSSTVRPQSPTGNEGI. Positions 398–411 are enriched in low complexity; the sequence is SRLSSSPPKSSAWP. The active-site Proton acceptor is H628. DUSP domains follow at residues 672–765 and 773–876; these read DETQ…LYVC and EKLE…RPSV. Residues 875–884 show a composition bias toward low complexity; that stretch reads SVSHQESETS. The tract at residues 875–897 is disordered; that stretch reads SVSHQESETSQSEEKIEVETRTV. Basic and acidic residues predominate over residues 886 to 897; that stretch reads SEEKIEVETRTV.

This sequence belongs to the peptidase C19 family. USP20/USP33 subfamily.

It localises to the cytoplasm. It is found in the perinuclear region. Its subcellular location is the cytoskeleton. The protein localises to the microtubule organizing center. The protein resides in the centrosome. The enzyme catalyses Thiol-dependent hydrolysis of ester, thioester, amide, peptide and isopeptide bonds formed by the C-terminal Gly of ubiquitin (a 76-residue protein attached to proteins as an intracellular targeting signal).. In terms of biological role, deubiquitinating enzyme involved in various processes such as centrosome duplication, cellular migration and beta-2 adrenergic receptor/ADRB2 recycling. Involved in regulation of centrosome duplication by mediating deubiquitination of ccp110 in S and G2/M phase, leading to stabilize ccp110 during the period which centrioles duplicate and elongate. Involved in cell migration via its interaction with intracellular domain of robo1, leading to regulate the Slit signaling. Plays a role in commissural axon guidance cross the ventral midline of the neural tube in a Slit-dependent manner, possibly by mediating the deubiquitination of robo1. Acts as a regulator of G-protein coupled receptor (GPCR) signaling by mediating the deubiquitination of beta-arrestins (arrb1 and arrb2) and beta-2 adrenergic receptor (adrb2). Deubiquitinates dio2, thereby regulating thyroid hormone regulation. Mediates deubiquitination of both 'Lys-48'- and 'Lys-63'-linked polyubiquitin chains. The sequence is that of Ubiquitin carboxyl-terminal hydrolase 33 (usp33) from Danio rerio (Zebrafish).